The following is a 1163-amino-acid chain: Leptin receptor (1163 aa).

Positions 1-21 are cleaved as a signal peptide; that stretch reads MICQKFCVVLLHWEFICVITA. Over 22–837 the chain is Extracellular; it reads FNLSYPITPW…QDNTEKHQND (816 aa). 7 N-linked (GlcNAc...) asparagine glycosylation sites follow: N23, N41, N56, N71, N79, N96, and N114. Intrachain disulfides connect C37–C88 and C87–C97. Disulfide bonds link C129–C140 and C184–C194. N-linked (GlcNAc...) asparagine glycans are attached at residues N185, N204, N274, N345, and N395. The Fibronectin type-III 1 domain maps to 237 to 331; the sequence is PPLGLRMEIT…TPHVFTTQDV (95 aa). Disulfide bonds link C350-C410 and C411-C416. Residue N431 is glycosylated (N-linked (GlcNAc...) asparagine). 3 cysteine pairs are disulfide-bonded: C434–C445, C471–C526, and C486–C496. The tract at residues 465–482 is leptin-binding; that stretch reads RRSSLYCFDIPSIHPISK. 3 consecutive Fibronectin type-III domains span residues 537–632, 637–730, and 738–831; these read PPSS…TVVM, PMRG…LTFS, and IVQS…QDNT. The short motif at 620–624 is the WSXWS motif element; the sequence is WSNWS. N-linked (GlcNAc...) asparagine glycosylation is found at N622, N657, N668, N686, N695, N726, and N748. Residues 838–860 traverse the membrane as a helical segment; that stretch reads AGLYVIVPVIISSSILLLGTLLI. Topologically, residues 861–1163 are cytoplasmic; that stretch reads LHQRMKKLFW…MENKMCDLTV (303 aa). The short motif at 869 to 877 is the Box 1 motif element; the sequence is FWEDVPNPK. A Phosphoserine modification is found at S880. The required for JAK2 activation stretch occupies residues 891 to 896; the sequence is ETFEHL. The required for STAT3 phosphorylation stretch occupies residues 896 to 904; sequence LFIKHTASV. At Y984 the chain carries Phosphotyrosine; by JAK2. Phosphotyrosine is present on Y1077. Phosphotyrosine; by JAK2 is present on Y1139.

The protein belongs to the type I cytokine receptor family. Type 2 subfamily. Present as a mixture of monomers and dimers. The phosphorylated receptor binds a number of SH2 domain-containing proteins such as JAK2, STAT3, PTPN11, and SOCS3. Interaction with SOCS3 inhibits JAK/STAT signaling and MAPK cascade. On ligand binding, phosphorylated on two conserved C-terminal tyrosine residues (isoform B only) by JAK2. Tyr-984 is required for complete binding and activation of PTPN11, ERK/FOS activation and, for interaction with SOCS3. Phosphorylation on Tyr-1139 is required for STAT3 binding/activation. Post-translationally, on ligand binding, phosphorylated on two conserved C-terminal tyrosine residues (isoform B only) by JAK2. Tyr-984 is required for complete binding and activation of PTPN11, ERK/FOS activation,for interaction with SOCS3 and SOCS3 mediated inhibition of leptin signaling. Phosphorylation on Tyr-1139 is required for STAT3 binding/activation. Phosphorylation of Tyr-1077 has a more accessory role. Widely expressed. High expression of isoform B in liver, adipose tissue, hypothalamus and choroid plexus.

The protein localises to the cell membrane. It is found in the basolateral cell membrane. Functionally, receptor for hormone LEP/leptin. On ligand binding, mediates LEP central and peripheral effects through the activation of different signaling pathways such as JAK2/STAT3 and MAPK cascade/FOS. In the hypothalamus, LEP acts as an appetite-regulating factor that induces a decrease in food intake and an increase in energy consumption by inducing anorexinogenic factors and suppressing orexigenic neuropeptides, also regulates bone mass and secretion of hypothalamo-pituitary-adrenal hormones. In the periphery, increases basal metabolism, influences reproductive function, regulates pancreatic beta-cell function and insulin secretion, is pro-angiogenic and affects innate and adaptive immunity. Control of energy homeostasis and melanocortin production (stimulation of POMC and full repression of AgRP transcription) is mediated by STAT3 signaling, whereas distinct signals regulate NPY and the control of fertility, growth and glucose homeostasis. Involved in the regulation of counter-regulatory response to hypoglycemia by inhibiting neurons of the parabrachial nucleus. Has a specific effect on T lymphocyte responses, differentially regulating the proliferation of naive and memory T-cells. Leptin increases Th1 and suppresses Th2 cytokine production. Its function is as follows. May transport LEP across the blood-brain barrier. Binds LEP and mediates LEP endocytosis. Does not induce phosphorylation of and activate STAT3. In Macaca mulatta (Rhesus macaque), this protein is Leptin receptor (LEPR).